The chain runs to 892 residues: Microsomal triglyceride transfer protein homolog (892 aa).

The N-terminal stretch at 1 to 19 (MFSSRIWLLLAVTVGVCLA) is a signal peptide.

As to quaternary structure, heterodimer; heterodimerizes with protein disulfide isomerase.

The protein localises to the endoplasmic reticulum. Catalyzes the transport of cholesteryl ester, and phospholipid between phospholipid surfaces. Does not catalyze transport of triglycerides. Required for the assembly and secretion of plasma lipoproteins that contain apolipoprotein B. Required for normal expression of klf-3. The protein is Microsomal triglyceride transfer protein homolog of Caenorhabditis elegans.